The primary structure comprises 192 residues: Small ribosomal subunit protein uS5 (192 aa).

The region spanning 20 to 83 (FVDKLVHINR…EAAKRGLIRV (64 aa)) is the S5 DRBM domain. Positions 162–192 (SVAARRGLKVSALQARRRDADPADTSDAAVA) are disordered.

Belongs to the universal ribosomal protein uS5 family. Part of the 30S ribosomal subunit. Contacts proteins S4 and S8.

With S4 and S12 plays an important role in translational accuracy. Its function is as follows. Located at the back of the 30S subunit body where it stabilizes the conformation of the head with respect to the body. In Methylorubrum populi (strain ATCC BAA-705 / NCIMB 13946 / BJ001) (Methylobacterium populi), this protein is Small ribosomal subunit protein uS5.